The following is a 290-amino-acid chain: ATP synthase gamma chain (290 aa).

Belongs to the ATPase gamma chain family. As to quaternary structure, F-type ATPases have 2 components, CF(1) - the catalytic core - and CF(0) - the membrane proton channel. CF(1) has five subunits: alpha(3), beta(3), gamma(1), delta(1), epsilon(1). CF(0) has three main subunits: a, b and c.

It localises to the cell inner membrane. Produces ATP from ADP in the presence of a proton gradient across the membrane. The gamma chain is believed to be important in regulating ATPase activity and the flow of protons through the CF(0) complex. This Amoebophilus asiaticus (strain 5a2) protein is ATP synthase gamma chain.